The sequence spans 89 residues: Large ribosomal subunit protein bL27 (89 aa).

A disordered region spans residues 1–20 (MAHKKAGGSSRNGRDSAGQR).

Belongs to the bacterial ribosomal protein bL27 family.

This Paramagnetospirillum magneticum (strain ATCC 700264 / AMB-1) (Magnetospirillum magneticum) protein is Large ribosomal subunit protein bL27.